The following is a 278-amino-acid chain: Elongation factor Ts (278 aa).

The interval 80–83 (TDFV) is involved in Mg(2+) ion dislocation from EF-Tu.

It belongs to the EF-Ts family.

It is found in the cytoplasm. In terms of biological role, associates with the EF-Tu.GDP complex and induces the exchange of GDP to GTP. It remains bound to the aminoacyl-tRNA.EF-Tu.GTP complex up to the GTP hydrolysis stage on the ribosome. This Pseudarthrobacter chlorophenolicus (strain ATCC 700700 / DSM 12829 / CIP 107037 / JCM 12360 / KCTC 9906 / NCIMB 13794 / A6) (Arthrobacter chlorophenolicus) protein is Elongation factor Ts.